The chain runs to 134 residues: Profilin-3 (134 aa).

Cys-13 and Cys-118 are oxidised to a cystine. Positions 84-100 match the Involved in PIP2 interaction motif; sequence AVIRGKKGSGGITIKKT. Thr-114 carries the phosphothreonine modification.

It belongs to the profilin family. Occurs in many kinds of cells as a complex with monomeric actin in a 1:1 ratio. Phosphorylated by MAP kinases.

It is found in the cytoplasm. Its subcellular location is the cytoskeleton. Its function is as follows. Binds to actin and affects the structure of the cytoskeleton. At high concentrations, profilin prevents the polymerization of actin, whereas it enhances it at low concentrations. The protein is Profilin-3 of Olea europaea (Common olive).